The sequence spans 121 residues: Protein yippee-like At3g55890 (121 aa).

The region spanning 12–109 (NIYICKLCKT…LELYKISGPH (98 aa)) is the Yippee domain. The Zn(2+) site is built by C16, C19, C72, and C75.

The protein belongs to the yippee family.

In Arabidopsis thaliana (Mouse-ear cress), this protein is Protein yippee-like At3g55890.